Reading from the N-terminus, the 273-residue chain is Nitrogenase iron protein 5 (273 aa).

Position 8–15 (8–15 (GKGGIGKS)) interacts with ATP. C94 is a [4Fe-4S] cluster binding site. R97 is modified (ADP-ribosylarginine; by dinitrogenase reductase ADP-ribosyltransferase). C129 lines the [4Fe-4S] cluster pocket.

The protein belongs to the NifH/BchL/ChlL family. Homodimer. [4Fe-4S] cluster serves as cofactor. Post-translationally, the reversible ADP-ribosylation of Arg-97 inactivates the nitrogenase reductase and regulates nitrogenase activity.

The catalysed reaction is N2 + 8 reduced [2Fe-2S]-[ferredoxin] + 16 ATP + 16 H2O = H2 + 8 oxidized [2Fe-2S]-[ferredoxin] + 2 NH4(+) + 16 ADP + 16 phosphate + 6 H(+). In terms of biological role, the key enzymatic reactions in nitrogen fixation are catalyzed by the nitrogenase complex, which has 2 components: the iron protein and the molybdenum-iron protein. The chain is Nitrogenase iron protein 5 (nifH5) from Clostridium pasteurianum.